The sequence spans 238 residues: 15,16-dihydrobiliverdin:ferredoxin oxidoreductase (238 aa).

This sequence belongs to the HY2 family.

It catalyses the reaction 15,16-dihydrobiliverdin + oxidized 2[4Fe-4S]-[ferredoxin] = biliverdin IXalpha + reduced 2[4Fe-4S]-[ferredoxin] + 2 H(+). Its function is as follows. Catalyzes the two-electron reduction of biliverdin IX-alpha at the C15 methine bridge. The chain is 15,16-dihydrobiliverdin:ferredoxin oxidoreductase from Prochlorococcus marinus (strain NATL1A).